The following is a 122-amino-acid chain: Small ribosomal subunit protein uS13 (122 aa).

Residues 89–122 are disordered; sequence GLRHRRGLPARGQRTKTNARTRKGPRRGVAGKRK.

It belongs to the universal ribosomal protein uS13 family. In terms of assembly, part of the 30S ribosomal subunit. Forms a loose heterodimer with protein S19. Forms two bridges to the 50S subunit in the 70S ribosome.

In terms of biological role, located at the top of the head of the 30S subunit, it contacts several helices of the 16S rRNA. In the 70S ribosome it contacts the 23S rRNA (bridge B1a) and protein L5 of the 50S subunit (bridge B1b), connecting the 2 subunits; these bridges are implicated in subunit movement. Contacts the tRNAs in the A and P-sites. The polypeptide is Small ribosomal subunit protein uS13 (Oleidesulfovibrio alaskensis (strain ATCC BAA-1058 / DSM 17464 / G20) (Desulfovibrio alaskensis)).